The primary structure comprises 53 residues: Rubredoxin (53 aa).

Residues methionine 1–alanine 53 enclose the Rubredoxin-like domain. 4 residues coordinate Fe cation: cysteine 6, cysteine 9, cysteine 39, and cysteine 42.

It belongs to the rubredoxin family. The cofactor is Fe(3+).

Rubredoxin is a small nonheme, iron protein lacking acid-labile sulfide. Its single Fe, chelated to 4 Cys, functions as an electron acceptor and may also stabilize the conformation of the molecule. The sequence is that of Rubredoxin from Acetoanaerobium sticklandii (strain ATCC 12662 / DSM 519 / JCM 1433 / CCUG 9281 / NCIMB 10654 / HF) (Clostridium sticklandii).